The chain runs to 444 residues: Serine carboxypeptidase-like 50 (444 aa).

Residues 1-22 (MEQATTLFILLSTLLLAVSVES) form the signal peptide. Cysteine 79 and cysteine 308 are joined by a disulfide. The active site involves serine 170. Asparagine 263 is a glycosylation site (N-linked (GlcNAc...) asparagine). Residue aspartate 345 is part of the active site. Asparagine 361 is a glycosylation site (N-linked (GlcNAc...) asparagine). Histidine 403 is an active-site residue.

This sequence belongs to the peptidase S10 family. Ubiquitous.

It localises to the secreted. Its function is as follows. Probable carboxypeptidase. This Arabidopsis thaliana (Mouse-ear cress) protein is Serine carboxypeptidase-like 50 (SCPL50).